Here is a 153-residue protein sequence, read N- to C-terminus: Small heat shock protein HspB (153 aa).

Residues 30-140 (AGTEDNYPPC…KPRRISISGS (111 aa)) enclose the sHSP domain.

Belongs to the small heat shock protein (HSP20) family.

The sequence is that of Small heat shock protein HspB (hspB) from Bradyrhizobium diazoefficiens (strain JCM 10833 / BCRC 13528 / IAM 13628 / NBRC 14792 / USDA 110).